The sequence spans 128 residues: Small ribosomal subunit protein uS13 (128 aa).

The segment at 85–128 is disordered; that stretch reads GSYRGLRHRRSLPVRGQRTHTNARTRKGPRRGTVANKKKATGKT. Over residues 89–128 the composition is skewed to basic residues; sequence GLRHRRSLPVRGQRTHTNARTRKGPRRGTVANKKKATGKT.

Belongs to the universal ribosomal protein uS13 family. As to quaternary structure, part of the 30S ribosomal subunit. Forms a loose heterodimer with protein S19. Forms two bridges to the 50S subunit in the 70S ribosome.

Functionally, located at the top of the head of the 30S subunit, it contacts several helices of the 16S rRNA. In the 70S ribosome it contacts the 23S rRNA (bridge B1a) and protein L5 of the 50S subunit (bridge B1b), connecting the 2 subunits; these bridges are implicated in subunit movement. Contacts the tRNAs in the A and P-sites. The chain is Small ribosomal subunit protein uS13 from Solibacter usitatus (strain Ellin6076).